Consider the following 78-residue polypeptide: NAD(P)H-quinone oxidoreductase subunit O (78 aa).

Belongs to the complex I NdhO subunit family. NDH-1 can be composed of about 15 different subunits; different subcomplexes with different compositions have been identified which probably have different functions.

The protein resides in the cell inner membrane. The enzyme catalyses a plastoquinone + NADH + (n+1) H(+)(in) = a plastoquinol + NAD(+) + n H(+)(out). It catalyses the reaction a plastoquinone + NADPH + (n+1) H(+)(in) = a plastoquinol + NADP(+) + n H(+)(out). NDH-1 shuttles electrons from an unknown electron donor, via FMN and iron-sulfur (Fe-S) centers, to quinones in the respiratory and/or the photosynthetic chain. The immediate electron acceptor for the enzyme in this species is believed to be plastoquinone. Couples the redox reaction to proton translocation, and thus conserves the redox energy in a proton gradient. Cyanobacterial NDH-1 also plays a role in inorganic carbon-concentration. The polypeptide is NAD(P)H-quinone oxidoreductase subunit O (Gloeobacter violaceus (strain ATCC 29082 / PCC 7421)).